Consider the following 187-residue polypeptide: ADP-ribosylation factor-like protein 9 (187 aa).

Residues 25-32 (GLDGAGKT), 69-73 (EIGGS), and 126-129 (NKQD) each bind GTP.

This sequence belongs to the small GTPase superfamily. Arf family.

The protein is ADP-ribosylation factor-like protein 9 (ARL9) of Homo sapiens (Human).